The primary structure comprises 452 residues: Methionine aminopeptidase 2 (452 aa).

The tract at residues 1–91 is disordered; that stretch reads MTGVTGTEDT…KNKKKKKKKI (91 aa). The span at 8-38 shows a compositional bias: basic and acidic residues; it reads EDTKVIESKINELNIDKSKPEKTNKVNKSDD. A compositionally biased stretch (acidic residues) spans 39–62; that stretch reads VDNDDVDNDDNDDEDNDDDDDEIT. Over residues 74–91 the composition is skewed to basic residues; sequence KKKKKNKNKNKKKKKKKI. Histidine 203 is a substrate binding site. A divalent metal cation contacts are provided by aspartate 223, aspartate 234, and histidine 305. Residue histidine 313 coordinates substrate. A divalent metal cation is bound by residues glutamate 338 and glutamate 433.

It belongs to the peptidase M24A family. Methionine aminopeptidase eukaryotic type 2 subfamily. Requires Co(2+) as cofactor. The cofactor is Zn(2+). Mn(2+) is required as a cofactor. Fe(2+) serves as cofactor.

Its subcellular location is the cytoplasm. It carries out the reaction Release of N-terminal amino acids, preferentially methionine, from peptides and arylamides.. Cotranslationally removes the N-terminal methionine from nascent proteins. The N-terminal methionine is often cleaved when the second residue in the primary sequence is small and uncharged (Met-Ala-, Cys, Gly, Pro, Ser, Thr, or Val). This chain is Methionine aminopeptidase 2, found in Candida dubliniensis (strain CD36 / ATCC MYA-646 / CBS 7987 / NCPF 3949 / NRRL Y-17841) (Yeast).